A 205-amino-acid polypeptide reads, in one-letter code: MLEARDLYCERDERTLFRGLSFTVEAGEWVQVTGGNGAGKTTLLRLLTGLARPDGGEVYWQGEPLRRVRDSFHRSLLWIGHQPGIKTRLTARENLHFFHPGDGARLPEALAQAGLAGFEDVPVAQLSAGQQRRVALARLWLTRAALWVLDEPFTAIDVNGVARLTRRMAAHTAQGGMVILTTHQPLPGAADTVRRLALTGGGAGL.

One can recognise an ABC transporter domain in the interval 2–205 (LEARDLYCER…LALTGGGAGL (204 aa)). 34–41 (GGNGAGKT) lines the ATP pocket.

This sequence belongs to the ABC transporter superfamily. CcmA exporter (TC 3.A.1.107) family. The complex is composed of two ATP-binding proteins (CcmA) and two transmembrane proteins (CcmB).

It is found in the cell inner membrane. It catalyses the reaction heme b(in) + ATP + H2O = heme b(out) + ADP + phosphate + H(+). In terms of biological role, part of the ABC transporter complex CcmAB involved in the biogenesis of c-type cytochromes; once thought to export heme, this seems not to be the case, but its exact role is uncertain. Responsible for energy coupling to the transport system. In Salmonella typhimurium (strain LT2 / SGSC1412 / ATCC 700720), this protein is Cytochrome c biogenesis ATP-binding export protein CcmA 2.